The following is a 295-amino-acid chain: Pantothenate synthetase (295 aa).

Residue Met-30–His-37 coordinates ATP. His-37 serves as the catalytic Proton donor. Gln-61 lines the (R)-pantoate pocket. Beta-alanine is bound at residue Gln-61. ATP is bound at residue Gly-149–Asp-152. A (R)-pantoate-binding site is contributed by Gln-155. Residues Val-178 and Met-186–Arg-189 contribute to the ATP site.

Belongs to the pantothenate synthetase family. In terms of assembly, homodimer.

It is found in the cytoplasm. The catalysed reaction is (R)-pantoate + beta-alanine + ATP = (R)-pantothenate + AMP + diphosphate + H(+). The protein operates within cofactor biosynthesis; (R)-pantothenate biosynthesis; (R)-pantothenate from (R)-pantoate and beta-alanine: step 1/1. Catalyzes the condensation of pantoate with beta-alanine in an ATP-dependent reaction via a pantoyl-adenylate intermediate. The chain is Pantothenate synthetase from Photobacterium profundum (strain SS9).